The sequence spans 103 residues: Small ribosomal subunit protein uS10 (103 aa).

The tract at residues 35–59 (LSGPVPLPTKTLEVPSRKSPDGEGT) is disordered.

The protein belongs to the universal ribosomal protein uS10 family. As to quaternary structure, part of the 30S ribosomal subunit.

Functionally, involved in the binding of tRNA to the ribosomes. This is Small ribosomal subunit protein uS10 (rps10) from Haloarcula marismortui (strain ATCC 43049 / DSM 3752 / JCM 8966 / VKM B-1809) (Halobacterium marismortui).